The following is a 470-amino-acid chain: Glutamate--tRNA ligase (470 aa).

The 'HIGH' region signature appears at 9-19; that stretch reads PSPTGFLHVGG. The 'KMSKS' region signature appears at 236–240; it reads KLSKR. Lysine 239 lines the ATP pocket.

The protein belongs to the class-I aminoacyl-tRNA synthetase family. Glutamate--tRNA ligase type 1 subfamily. As to quaternary structure, monomer.

Its subcellular location is the cytoplasm. It catalyses the reaction tRNA(Glu) + L-glutamate + ATP = L-glutamyl-tRNA(Glu) + AMP + diphosphate. Functionally, catalyzes the attachment of glutamate to tRNA(Glu) in a two-step reaction: glutamate is first activated by ATP to form Glu-AMP and then transferred to the acceptor end of tRNA(Glu). In Psychromonas ingrahamii (strain DSM 17664 / CCUG 51855 / 37), this protein is Glutamate--tRNA ligase.